A 344-amino-acid chain; its full sequence is MLRVAIAGASGYTGFELVRLLDRHPHAELKMITSRVHRGQRLDKVYPALRKHCDLVFEEPDPERLAAEADLVFTALPHRAAMDMIPDLLKGGAKVVDLSADYRFLDAAVYEAWYEPHKTPELLKEAVYGLPELHREEIRNARLVGNPGCYPTSVILAAAPLVAGKLADPRTLIADSKSGVSGAGRGVSLTVHFCEVNDGFKAYKVGEHRHTPEIEQELSRLAGEKLAVTFTPHLVPMSRGILSTVYATVIQGVTPEDISAAYESFYRNARFVRLCRAEMPTTLQVRGSNYCDIGWRLDSRTGRAVLIAVIDNLTRGASGQAICNMNIMCGFPEDCGLQDAPWQP.

C149 is a catalytic residue.

It belongs to the NAGSA dehydrogenase family. Type 1 subfamily.

The protein resides in the cytoplasm. It carries out the reaction N-acetyl-L-glutamate 5-semialdehyde + phosphate + NADP(+) = N-acetyl-L-glutamyl 5-phosphate + NADPH + H(+). The protein operates within amino-acid biosynthesis; L-arginine biosynthesis; N(2)-acetyl-L-ornithine from L-glutamate: step 3/4. Its function is as follows. Catalyzes the NADPH-dependent reduction of N-acetyl-5-glutamyl phosphate to yield N-acetyl-L-glutamate 5-semialdehyde. This Syntrophobacter fumaroxidans (strain DSM 10017 / MPOB) protein is N-acetyl-gamma-glutamyl-phosphate reductase.